The following is a 509-amino-acid chain: 3-ketoacyl-CoA synthase 11 (509 aa).

A run of 2 helical transmembrane segments spans residues 36–56 (LITH…AAQI) and 75–95 (LISV…YFMT). An FAE domain is found at 92–381 (YFMTRPRPVY…FFATLVGRKL (290 aa)). Active-site residues include cysteine 236, histidine 315, histidine 399, histidine 403, and asparagine 436.

The protein belongs to the thiolase-like superfamily. Chalcone/stilbene synthases family. In terms of tissue distribution, only expressed in guard cells. Expressed in siliques, flowers, leaves, stems, roots and seedlings.

Its subcellular location is the membrane. The catalysed reaction is a very-long-chain acyl-CoA + malonyl-CoA + H(+) = a very-long-chain 3-oxoacyl-CoA + CO2 + CoA. Its pathway is lipid metabolism; fatty acid biosynthesis. Its function is as follows. Active on both saturated and mono-unsaturated acyl chains C16 to C20. The protein is 3-ketoacyl-CoA synthase 11 of Arabidopsis thaliana (Mouse-ear cress).